Here is a 472-residue protein sequence, read N- to C-terminus: ATP-dependent rRNA helicase rrp3 (472 aa).

The disordered stretch occupies residues 1–52; it reads MPAIKKRKIAREAPQQEDHSDSEAHSSASEDAAPNTTEQEQEPSEAPKQAPK. Residues 10–24 show a composition bias toward basic and acidic residues; sequence AREAPQQEDHSDSEA. The Q motif motif lies at 52–80; that stretch reads KSFKELGLIEQLCEACDSMGYKAPTAIQA. One can recognise a Helicase ATP-binding domain in the interval 83–254; it reads IPLALQGRDL…RASLQNPLRV (172 aa). 96–103 is a binding site for ATP; that stretch reads AETGSGKT. A DEAD box motif is present at residues 202 to 205; it reads DEAD. One can recognise a Helicase C-terminal domain in the interval 282 to 426; the sequence is YLVYLLNEFV…EYPAEKDEVM (145 aa). Residues 443–472 are disordered; sequence MKNYDEKKGSRGKKFAKGKRSREDMDQEEG. Over residues 452–462 the composition is skewed to basic residues; it reads SRGKKFAKGKR.

It belongs to the DEAD box helicase family. DDX47/RRP3 subfamily. As to quaternary structure, interacts with the SSU processome.

Its subcellular location is the nucleus. The enzyme catalyses ATP + H2O = ADP + phosphate + H(+). ATP-dependent rRNA helicase required for pre-ribosomal RNA processing. Involved in the maturation of the 35S-pre-rRNA and to its cleavage to mature 18S rRNA. The protein is ATP-dependent rRNA helicase rrp3 of Aspergillus oryzae (strain ATCC 42149 / RIB 40) (Yellow koji mold).